Consider the following 84-residue polypeptide: Cytochrome b559 subunit alpha (84 aa).

Residues 21–35 traverse the membrane as a helical segment; the sequence is VIHSITIPSLFIAGW. His23 is a heme binding site.

The protein belongs to the PsbE/PsbF family. As to quaternary structure, heterodimer of an alpha subunit and a beta subunit. PSII is composed of 1 copy each of membrane proteins PsbA, PsbB, PsbC, PsbD, PsbE, PsbF, PsbH, PsbI, PsbJ, PsbK, PsbL, PsbM, PsbT, PsbX, PsbY, PsbZ, Psb30/Ycf12, at least 3 peripheral proteins of the oxygen-evolving complex and a large number of cofactors. It forms dimeric complexes. Heme b serves as cofactor.

It localises to the plastid membrane. Its function is as follows. This b-type cytochrome is tightly associated with the reaction center of photosystem II (PSII). PSII is a light-driven water:plastoquinone oxidoreductase that uses light energy to abstract electrons from H(2)O, generating O(2) and a proton gradient subsequently used for ATP formation. It consists of a core antenna complex that captures photons, and an electron transfer chain that converts photonic excitation into a charge separation. This chain is Cytochrome b559 subunit alpha, found in Cuscuta gronovii (Common dodder).